The primary structure comprises 356 residues: Dual-specificity RNA methyltransferase RlmN (356 aa).

The Proton acceptor role is filled by Glu-89. The 234-residue stretch at 108–341 (SHARYTICVS…CTIRESKGLD (234 aa)) folds into the Radical SAM core domain. Cysteines 115 and 346 form a disulfide. [4Fe-4S] cluster contacts are provided by Cys-122, Cys-126, and Cys-129. S-adenosyl-L-methionine-binding positions include 172-173 (GE), Ser-204, 227-229 (SLH), and Asn-303. Catalysis depends on Cys-346, which acts as the S-methylcysteine intermediate.

It belongs to the radical SAM superfamily. RlmN family. It depends on [4Fe-4S] cluster as a cofactor.

It is found in the cytoplasm. It catalyses the reaction adenosine(2503) in 23S rRNA + 2 reduced [2Fe-2S]-[ferredoxin] + 2 S-adenosyl-L-methionine = 2-methyladenosine(2503) in 23S rRNA + 5'-deoxyadenosine + L-methionine + 2 oxidized [2Fe-2S]-[ferredoxin] + S-adenosyl-L-homocysteine. The enzyme catalyses adenosine(37) in tRNA + 2 reduced [2Fe-2S]-[ferredoxin] + 2 S-adenosyl-L-methionine = 2-methyladenosine(37) in tRNA + 5'-deoxyadenosine + L-methionine + 2 oxidized [2Fe-2S]-[ferredoxin] + S-adenosyl-L-homocysteine. Its function is as follows. Specifically methylates position 2 of adenine 2503 in 23S rRNA and position 2 of adenine 37 in tRNAs. m2A2503 modification seems to play a crucial role in the proofreading step occurring at the peptidyl transferase center and thus would serve to optimize ribosomal fidelity. This chain is Dual-specificity RNA methyltransferase RlmN, found in Campylobacter jejuni subsp. jejuni serotype O:23/36 (strain 81-176).